Consider the following 196-residue polypeptide: VDSEAHLQPAARWVAHGAGEILDGVQTFATLEQALADVDFTVATTARSRARFHYYCTPPELLEQLSERKQWVGQAALVFGREDSGLTNEELALADLLTGVPMQADYPSLNLGQAVMVYCYQLASLMGVNAAPQEAAAPEGQLRALRHRADALLDALEVGDDQKLRDWLHQRLGALPQRDTAMLHTLLHDIEKKLAK.

Residues T44–A46, G80, V100, and P107–L109 each bind S-adenosyl-L-methionine.

This sequence belongs to the class IV-like SAM-binding methyltransferase superfamily. RNA methyltransferase TrmH family.

This is an uncharacterized protein from Serratia marcescens.